A 286-amino-acid chain; its full sequence is P2R1A-PPP2R2A-interacting phosphatase regulator 1 (286 aa).

Residues 1-46 are disordered; that stretch reads MAQEKMELDLELPAGTGASPAEGGGPGSGGLRRSNSAPLIHGLSDS. Ser-34 is subject to Phosphoserine. Ser-36 is modified (phosphoserine; by CHEK1). Residues Ser-44, Ser-47, Ser-61, and Ser-75 each carry the phosphoserine modification. Lys-88 participates in a covalent cross-link: Glycyl lysine isopeptide (Lys-Gly) (interchain with G-Cter in SUMO1). Ser-142 and Ser-146 each carry phosphoserine. Thr-148 carries the post-translational modification Phosphothreonine. The tract at residues 166–187 is disordered; that stretch reads SNGLPPSPIPSPTTRFTTRRSQ. Over residues 177 to 187 the composition is skewed to low complexity; it reads PTTRFTTRRSQ. Ser-186 and Ser-188 each carry phosphoserine. The segment at 238 to 286 is disordered; the sequence is VSSDTLDGNSSSAGSSCNSPAKVSTTTDSPVSPAQAASPFIPVDELSSK. The span at 245-256 shows a compositional bias: low complexity; it reads GNSSSAGSSCNS. Residues 258–269 show a composition bias toward polar residues; it reads AKVSTTTDSPVS. 3 positions are modified to phosphoserine: Ser-266, Ser-269, and Ser-275.

The protein belongs to the FAM122 family. As to quaternary structure, interacts with PPP2CA and PPP2R1A. Interacts (via its N-terminus) with PPP2R2A; the interaction is direct and this interaction inhibits PP2A activity. The CHEK1-mediated Ser-36 phosphorylated form interacts with 14-3-3 proteins. In terms of processing, CHEK1-mediated phosphorylation at Ser-36 negatively regulates its ability to inhibit serine/threonine-protein phosphatase 2A (PP2A) activity. Phosphorylation leads to its release from the PP2A complex and its sequestration by 14-3-3 proteins in the cytoplasm resulting in its inability to translocate to the nucleus, where it otherwise inhibits PP2A.

The protein localises to the nucleus. It localises to the cytoplasm. Its function is as follows. Acts as an inhibitor of serine/threonine-protein phosphatase 2A (PP2A) activity. Inhibits PP2A activity by blocking the substrate binding site on PPP2R2A and the active site of PPP2CA. Potentiates ubiquitin-mediated proteasomal degradation of serine/threonine-protein phosphatase 2A catalytic subunit alpha (PPP2CA). Inhibits PP2A-mediated dephosphorylation of WEE1, promoting ubiquitin-mediated proteolysis of WEE1, thereby releasing G2/M checkpoint. The sequence is that of P2R1A-PPP2R2A-interacting phosphatase regulator 1 from Rattus norvegicus (Rat).